Reading from the N-terminus, the 55-residue chain is Large ribosomal subunit protein bL33 (55 aa).

This sequence belongs to the bacterial ribosomal protein bL33 family.

The protein is Large ribosomal subunit protein bL33 of Phenylobacterium zucineum (strain HLK1).